Consider the following 705-residue polypeptide: Ribosomal RNA large subunit methyltransferase K/L (705 aa).

One can recognise a THUMP domain in the interval 43–154 (VVYRCCLWSR…GEKGILGFDL (112 aa)).

Belongs to the methyltransferase superfamily. RlmKL family.

The protein localises to the cytoplasm. It catalyses the reaction guanosine(2445) in 23S rRNA + S-adenosyl-L-methionine = N(2)-methylguanosine(2445) in 23S rRNA + S-adenosyl-L-homocysteine + H(+). The catalysed reaction is guanosine(2069) in 23S rRNA + S-adenosyl-L-methionine = N(2)-methylguanosine(2069) in 23S rRNA + S-adenosyl-L-homocysteine + H(+). Specifically methylates the guanine in position 2445 (m2G2445) and the guanine in position 2069 (m7G2069) of 23S rRNA. The sequence is that of Ribosomal RNA large subunit methyltransferase K/L from Aliivibrio fischeri (strain MJ11) (Vibrio fischeri).